Here is a 529-residue protein sequence, read N- to C-terminus: HTH-type transcriptional activator Btr (529 aa).

The segment at residues 182–201 (LAQLSQMAGISAKHYSESFK) is a DNA-binding region (H-T-H motif). The region spanning 268 to 528 (KIAAYGRGTM…QTVSLLSGDC (261 aa)) is the Fe/B12 periplasmic-binding domain.

As to quaternary structure, binds with high affinity to both apo-bacillibactin and iron-bacillibactin.

Its subcellular location is the cytoplasm. Functionally, in iron-limited conditions, activates expression of the feuABCybbA operon, which encodes the bacillibactin uptake system. Acts by binding directly to a conserved direct repeat element upstream of the feuA promoter. Activity is increased in the presence of bacillibactin. This is HTH-type transcriptional activator Btr (btr) from Bacillus subtilis (strain 168).